The following is a 353-amino-acid chain: S-adenosylmethionine:tRNA ribosyltransferase-isomerase (353 aa).

It belongs to the QueA family. In terms of assembly, monomer.

The protein localises to the cytoplasm. The enzyme catalyses 7-aminomethyl-7-carbaguanosine(34) in tRNA + S-adenosyl-L-methionine = epoxyqueuosine(34) in tRNA + adenine + L-methionine + 2 H(+). It functions in the pathway tRNA modification; tRNA-queuosine biosynthesis. Functionally, transfers and isomerizes the ribose moiety from AdoMet to the 7-aminomethyl group of 7-deazaguanine (preQ1-tRNA) to give epoxyqueuosine (oQ-tRNA). This Baumannia cicadellinicola subsp. Homalodisca coagulata protein is S-adenosylmethionine:tRNA ribosyltransferase-isomerase.